Here is a 66-residue protein sequence, read N- to C-terminus: Large ribosomal subunit protein bL35 (66 aa).

Residues 1–15 are compositionally biased toward basic residues; it reads MSKMKTKSGAKKRFK. A disordered region spans residues 1–35; it reads MSKMKTKSGAKKRFKLTASGKVKAGQAGKRHGMIK.

The protein belongs to the bacterial ribosomal protein bL35 family.

The polypeptide is Large ribosomal subunit protein bL35 (Maricaulis maris (strain MCS10) (Caulobacter maris)).